Here is a 333-residue protein sequence, read N- to C-terminus: Trans-enoyl reductase apdC (333 aa).

Residue 45–48 (FDAK) participates in NADP(+) binding. 131 to 138 (VGLATVGM) is a binding site for substrate. NADP(+) contacts are provided by residues 167–170 (SPHN), Y185, and 232–233 (LD). Position 252–256 (252–256 (SVTMY)) interacts with substrate. 321–322 (VS) serves as a coordination point for NADP(+).

It belongs to the zinc-containing alcohol dehydrogenase family. In terms of assembly, monomer.

The protein operates within secondary metabolite biosynthesis. Trans-enoyl reductase; part of the gene cluster that mediates the biosynthesis of aspyridones. The polyketide-amino acid backbone preaspyridone A is first assembled by the PKS-NRPS hybrid apdA. The assembly of preaspyridone A is initiated by loading of malonyl-CoA onto apdA, followed by decarboxylation to yield the acetyl starter unit. The growing polyketide chain then elongates into a tetraketide. The adpA PKS module catalyzes three Claisen condensations, as well as beta-keto processing and methylation. Alpha-methylation step during polyketide synthesis is a prerequisite and a key checkpoint for chain transfer between PKS and NRPS modules. The downstream NRPS module contains the condensation (C), adenylation (A), and thiolation (T) domains and catalyzes the incorporation of tyrosine via the formation of the L-tyrosinyl-thioester and the amide linkage between L-tyrosinyl-thioester and the tetraketide. The bimodular assembly line is terminated with a reductase (R) domain that facilitates formation and release of the tetramic acid product. Because apdA lacks a designated enoylreductase (ER) domain, the required activity is provided the enoyl reductase apdC. ApdC appears to operate with different stereoselectivity in different PKS cycle. Combined with apdC, apdA is proposed to synthesize preaspyridone A via about 20 enzymatic steps. A number of oxidative steps performed successively by the cytochrome P450 monooxygenases apdE and apdB are required for the conversion of preaspyridone A to aspyridone A. The cytochrome P450 monooxygenase apdE is responsible for the oxidative dephenylation of preaspyridone A. Finally, the predicted FAD-dependent monooxygenase apdD and the acyl-CoA dehydrogenase apdG may be involved in the transformation of aspyridone A into aspyridone B. The protein is Trans-enoyl reductase apdC of Emericella nidulans (strain FGSC A4 / ATCC 38163 / CBS 112.46 / NRRL 194 / M139) (Aspergillus nidulans).